The primary structure comprises 2512 residues: RNA replication protein (2512 aa).

Positions 156-367 (RLTFSKNVAH…RLDVYLDKFL (212 aa)) constitute an Alphavirus-like MT domain. The 121-residue stretch at 683 to 803 (LTVIQVPGDG…HSHYSLLVPC (121 aa)) folds into the OTU domain. Residues 1520–1696 (AIYTSLVAHN…DFVNTEARPL (177 aa)) form the (+)RNA virus helicase ATP-binding domain. The (+)RNA virus helicase C-terminal domain maps to 1697 to 1874 (ARTFRSPPDV…HLSLSGGGTT (178 aa)). The region spanning 2265 to 2378 (FDSLEIDIKK…VGEKRDLQCD (114 aa)) is the RdRp catalytic domain.

It catalyses the reaction ATP + H2O = ADP + phosphate + H(+). The enzyme catalyses RNA(n) + a ribonucleoside 5'-triphosphate = RNA(n+1) + diphosphate. Its function is as follows. RNA replication. The central part of this protein possibly functions as an ATP-binding helicase (Potential). In Citrus leprosis virus C (isolate Citrus sinesis/Brazil/Cordeiropolis/2003) (CiLV-C), this protein is RNA replication protein.